A 335-amino-acid polypeptide reads, in one-letter code: L-tyrosine isonitrile synthase (335 aa).

It belongs to the isocyanide synthase family.

It carries out the reaction D-ribulose 5-phosphate + L-tyrosine = (2S)-3-(4-hydroxyphenyl)-2-isocyanopropanoate + hydroxyacetone + formaldehyde + phosphate + H2O + H(+). Involved in the biosynthesis of rhabduscin, a tyrosine derivative which is a potent inhibitor of phenoloxidase, a key component of the insect's innate immune system. Responsible for the synthesis of the isonitrile group on tyrosine using the C2 of ribulose 5-phosphate as the source of the carbon atom. This chain is L-tyrosine isonitrile synthase, found in Xenorhabdus nematophila (strain ATCC 19061 / DSM 3370 / CCUG 14189 / LMG 1036 / NCIMB 9965 / AN6).